The following is a 102-amino-acid chain: Small ribosomal subunit protein uS10 (102 aa).

Belongs to the universal ribosomal protein uS10 family. Part of the 30S ribosomal subunit.

Involved in the binding of tRNA to the ribosomes. The chain is Small ribosomal subunit protein uS10 from Nitrosospira multiformis (strain ATCC 25196 / NCIMB 11849 / C 71).